Here is a 569-residue protein sequence, read N- to C-terminus: Sialic acid-binding Ig-like lectin 5 (569 aa).

The signal sequence occupies residues 1–16 (MRWAWLLPLLWAGCLA). At 17-439 (TDGYSLSVTG…KSETSRGTVL (423 aa)) the chain is on the extracellular side. Residues 18–116 (DGYSLSVTGS…DTGTYFFRLD (99 aa)) form the Ig-like V-type domain. Cystine bridges form between cysteine 35-cysteine 163, cysteine 40-cysteine 96, cysteine 157-cysteine 206, and cysteine 265-cysteine 308. Asparagine 95 carries N-linked (GlcNAc...) asparagine glycosylation. 3 residues coordinate N-acetylneuraminate: arginine 114, lysine 120, and serine 122. Ig-like C2-type domains are found at residues 139 to 224 (PNIQ…QQLS) and 229 to 324 (PQKM…VSLS). 3 N-linked (GlcNAc...) asparagine glycosylation sites follow: asparagine 151, asparagine 200, and asparagine 203. N-linked (GlcNAc...) asparagine glycans are attached at residues asparagine 369, asparagine 372, and asparagine 387. A helical membrane pass occupies residues 440–460 (GAIWGAGLMALLAVCLCLIFF). The Cytoplasmic segment spans residues 461–569 (TVKVLRKKSA…VYTEIKIHKC (109 aa)). The tract at residues 508 to 556 (HLNEPGSQTQKEQPPLATVPDTQKDEPELHYASLSFQGPMPPKPQNTEA) is disordered. An ITIM motif motif is present at residues 536 to 541 (LHYASL). Positions 559 to 564 (SVYTEI) match the SLAM-like motif motif.

This sequence belongs to the immunoglobulin superfamily. SIGLEC (sialic acid binding Ig-like lectin) family. As to expression, predominantly expressed by immature monocytic/myeloid lineage cells in bone marrow. Also found at lower levels in mature neutrophils and monocytes.

It is found in the membrane. In terms of biological role, putative adhesion molecule that mediates sialic-acid dependent binding to cells. Preferentially binds to alpha-2,3-linked sialic acid. The sialic acid recognition site may be masked by cis interactions with sialic acids on the same cell surface. The protein is Sialic acid-binding Ig-like lectin 5 (Siglec5) of Mus musculus (Mouse).